A 432-amino-acid chain; its full sequence is D-amino acid dehydrogenase (432 aa).

Val3–Trp17 serves as a coordination point for FAD.

It belongs to the DadA oxidoreductase family. It depends on FAD as a cofactor.

It carries out the reaction a D-alpha-amino acid + A + H2O = a 2-oxocarboxylate + AH2 + NH4(+). It functions in the pathway amino-acid degradation; D-alanine degradation; NH(3) and pyruvate from D-alanine: step 1/1. Oxidative deamination of D-amino acids. This chain is D-amino acid dehydrogenase, found in Shigella dysenteriae serotype 1 (strain Sd197).